We begin with the raw amino-acid sequence, 591 residues long: 4-coumarate--CoA ligase-like 3 (591 aa).

Residues Ser228, Ser229, Gly230, Thr231, Ser232, and Lys236 each coordinate ATP. Tyr280 is a binding site for (E)-4-coumaroyl-AMP. CoA is bound at residue Arg301. Positions 303 to 375 (DAGDAVAAIG…QAFPHVDFIQ (73 aa)) are SBD1. Positions 353, 375, 376, and 380 each coordinate (E)-4-coumaroyl-AMP. ATP contacts are provided by Gln375, Gly376, Thr380, Asp459, and Arg474. Positions 376-440 (GYGMTESTAV…LHGPGIMKGY (65 aa)) are SBD2. Residues Lys476 and Lys480 each coordinate (E)-4-coumaroyl-AMP. Residues Lys482 and Gly483 each coordinate CoA. ATP is bound at residue Lys565.

It belongs to the ATP-dependent AMP-binding enzyme family. Mg(2+) is required as a cofactor.

It catalyses the reaction (E)-4-coumarate + ATP + CoA = (E)-4-coumaroyl-CoA + AMP + diphosphate. It carries out the reaction (E)-4-coumarate + ATP + H(+) = (E)-4-coumaroyl-AMP + diphosphate. The enzyme catalyses (E)-4-coumaroyl-AMP + CoA = (E)-4-coumaroyl-CoA + AMP + H(+). In terms of biological role, carboxylate--CoA ligase that may use 4-coumarate as substrate. Follows a two-step reaction mechanism, wherein the carboxylate substrate first undergoes adenylation by ATP, followed by a thioesterification in the presence of CoA to yield the final CoA thioester. The protein is 4-coumarate--CoA ligase-like 3 (4CLL3) of Oryza sativa subsp. japonica (Rice).